An 817-amino-acid chain; its full sequence is Probable inorganic carbon transporter subunit DabA (817 aa).

4 residues coordinate Zn(2+): Cys-301, Asp-303, His-491, and Cys-506. 2 disordered regions span residues 598 to 617 and 794 to 817; these read NTSVDEGRPAAAVRETERRA and GWHARPAPDASTATKAPASAGVPS.

It belongs to the inorganic carbon transporter (TC 9.A.2) DabA family. Forms a complex with DabB. It depends on Zn(2+) as a cofactor.

Its subcellular location is the cell inner membrane. Its function is as follows. Part of an energy-coupled inorganic carbon pump. This chain is Probable inorganic carbon transporter subunit DabA, found in Salinibacter ruber (strain DSM 13855 / M31).